The following is a 346-amino-acid chain: fMet-Leu-Phe receptor (346 aa).

Asparagine 1 and asparagine 7 each carry an N-linked (GlcNAc...) asparagine glycan. Over 1-24 (NSSLPTNISGGTPAVSAGYLFLDI) the chain is Extracellular. The helical transmembrane segment at 25–47 (VTYLVFAVTFVLGVLGNGLVIWV) threads the bilayer. The Cytoplasmic segment spans residues 48–58 (AGFRMTHTVTT). A helical membrane pass occupies residues 59 to 80 (ISYLNLAVADFCFTSTLPFFMV). Topologically, residues 81–97 (KKAMGGHWPFGWFLCKF) are extracellular. A disulfide bridge links cysteine 95 with cysteine 173. The chain crosses the membrane as a helical span at residues 98 to 118 (IFTIVDINLFGSVFLIALIAL). The Cytoplasmic segment spans residues 119–137 (DRCVCVLHPVWTQNHRTVS). The helical transmembrane segment at 138–159 (LAKKVIIGPWVMALLLTLPVII) threads the bilayer. Residues 160-202 (RVTTVPGKMGTVACTFNFSPWTNDPKERIKVAVAMLTVRGIIR) lie on the Extracellular side of the membrane. Residues 203-223 (FIIGFSAPMSIVAVSYGLIAT) form a helical membrane-spanning segment. The Cytoplasmic segment spans residues 224–239 (KIDKQGLIKSSRTLRV). A helical membrane pass occupies residues 240-263 (LSFVAAAFFLSWSPYQVVALIATV). The Extracellular portion of the chain corresponds to 264-282 (RIRELLQGMYKEIGIAVDV). Residues 283-302 (TSALAFFNSCLNPMLYVFMG) form a helical membrane-spanning segment. Residues 303-346 (QDFRERLIHALPASLERALTEDSTQTSDTATNSTLPSAEVALQA) lie on the Cytoplasmic side of the membrane. Positions 322–346 (TEDSTQTSDTATNSTLPSAEVALQA) are disordered. Residues 323-338 (EDSTQTSDTATNSTLP) show a composition bias toward polar residues.

It belongs to the G-protein coupled receptor 1 family. In terms of processing, phosphorylated; which is necessary for desensitization.

It localises to the cell membrane. Its function is as follows. High affinity receptor for N-formyl-methionyl peptides (fMLP), which are powerful neutrophil chemotactic factors. Binding of fMLP to the receptor stimulates intracellular calcium mobilization and superoxide anion release. This response is mediated via a G-protein that activates a phosphatidylinositol-calcium second messenger system. Receptor for TAFA4, mediates its effects on chemoattracting macrophages, promoting phagocytosis and increasing ROS release. Receptor for cathepsin CTSG, leading to increased phagocyte chemotaxis. This Gorilla gorilla gorilla (Western lowland gorilla) protein is fMet-Leu-Phe receptor (FPR1).